Reading from the N-terminus, the 355-residue chain is Peptide chain release factor 1 (355 aa).

Q232 bears the N5-methylglutamine mark. Positions 282–309 (EQNASISAERKSQVGSGDRSERIRTYNY) are disordered. Basic and acidic residues predominate over residues 289–305 (AERKSQVGSGDRSERIR).

Belongs to the prokaryotic/mitochondrial release factor family. In terms of processing, methylated by PrmC. Methylation increases the termination efficiency of RF1.

The protein resides in the cytoplasm. Its function is as follows. Peptide chain release factor 1 directs the termination of translation in response to the peptide chain termination codons UAG and UAA. The chain is Peptide chain release factor 1 from Desulfatibacillum aliphaticivorans.